Here is a 410-residue protein sequence, read N- to C-terminus: Multifunctional CCA protein (410 aa).

Residues glycine 8 and arginine 11 each contribute to the ATP site. Positions 8 and 11 each coordinate CTP. Residues aspartate 21 and aspartate 23 each contribute to the Mg(2+) site. Residues arginine 91, arginine 138, and arginine 141 each coordinate ATP. Residues arginine 91, arginine 138, and arginine 141 each coordinate CTP. The HD domain occupies 229 to 347 (TGIHQEMVSD…AQLALVCEAD (119 aa)).

Belongs to the tRNA nucleotidyltransferase/poly(A) polymerase family. Bacterial CCA-adding enzyme type 1 subfamily. Monomer. Can also form homodimers and oligomers. It depends on Mg(2+) as a cofactor. Requires Ni(2+) as cofactor.

It catalyses the reaction a tRNA precursor + 2 CTP + ATP = a tRNA with a 3' CCA end + 3 diphosphate. The enzyme catalyses a tRNA with a 3' CCA end + 2 CTP + ATP = a tRNA with a 3' CCACCA end + 3 diphosphate. Functionally, catalyzes the addition and repair of the essential 3'-terminal CCA sequence in tRNAs without using a nucleic acid template. Adds these three nucleotides in the order of C, C, and A to the tRNA nucleotide-73, using CTP and ATP as substrates and producing inorganic pyrophosphate. tRNA 3'-terminal CCA addition is required both for tRNA processing and repair. Also involved in tRNA surveillance by mediating tandem CCA addition to generate a CCACCA at the 3' terminus of unstable tRNAs. While stable tRNAs receive only 3'-terminal CCA, unstable tRNAs are marked with CCACCA and rapidly degraded. This chain is Multifunctional CCA protein, found in Xanthomonas axonopodis pv. citri (strain 306).